The chain runs to 894 residues: MGLDVDSVPIAEAAAPSSMAATEPPADKIAQLDRDASNVAPMNTDSSRETMPTSPRALEPAQVTPLSSDVAYEGLVQGKDPSDDSIIAATPLQRTFSTVAPTMTTQPNRLQLIDEDQQFHGAEFNDHLKQWGLSDAGFGYDICAVLGSQSTGKSTLLNRLFGTNFDVMDERARQQTTKGIWLCRGMDRNVLVMDVEGTDGRERGEDQDFERKSALFSLATAECLIVNMWENQVGLFQGANMALLKTVLDVNLSLFQAGRARAGSAKEKTLLLFVIRDFIGTTPLANLEATIRTDLQRIWASLTKPESLVHAELGDFFDLGFATLPHKVLQAKEFDADILKLQRRFIDRGDESYVFKTEYHKRIPIDGLPHYLEGVWEQIVQNKDLDLPTQQELLAQFRCDEIATTASLAFSSAMSALRAELDAGHVLESLGNDMARHRSEALAMFDKDASRYHQVVYARKREDLLVKLNAALLPFFLCQLKNLHNELTDQCKRVIQEGTKQPAYNFGLLVEEGITKAMRAFDDETARLVLPETDWKVDDERAQLLDELHTLARTLRANETRKLSIQLEKDMRRELADPVELALSQPDISMWNNVLSAFHRVNEQVANMYRTRAASLNTTPDEDTTAVAQLQQASWRLLLEKVHEQTSETVLASRLRGYFEDRFRYDAGGVPRVWKPSDDIDDIFVKSRDATLALIPLYATIQPDDPSLQMSVVSLVGAPEESLETPSYDEARHVLSERKCAEIGQRFRREADAAYIEAKRGTVSSMSQVPIWMYGVLVVLGWNEAMAVLRNPVYFTLLCMVLATAYVIWRLNLGTPVLALASGMTRELRAFGEEQLRTYLDGTPPSANRAREYRVPSGSTAHVSEKTPHRPLTTSGAAEADTVEDSHPRLPASF.

The disordered stretch occupies residues Met1–Thr64. Over Met1–Gln768 the chain is Cytoplasmic. A compositionally biased stretch (low complexity) spans Pro9–Pro24. Over residues Ala40–Thr53 the composition is skewed to polar residues. The 223-residue stretch at Gly137–Tyr359 folds into the GB1/RHD3-type G domain. Gly147–Ser154 lines the GTP pocket. Positions Lys536–Glu559 form a coiled coil. Residues Val769–Leu789 traverse the membrane as a helical segment. The Lumenal portion of the chain corresponds to Arg790–Pro792. The helical transmembrane segment at Val793 to Leu813 threads the bilayer. Residues Gly814–Phe894 lie on the Cytoplasmic side of the membrane. The disordered stretch occupies residues Asp841 to Phe894.

It belongs to the TRAFAC class dynamin-like GTPase superfamily. GB1/RHD3 GTPase family. RHD3 subfamily.

The protein resides in the endoplasmic reticulum membrane. Functionally, cooperates with the reticulon proteins and tubule-shaping DP1 family proteins to generate and maintain the structure of the tubular endoplasmic reticulum network. Has GTPase activity, which is required for its function in ER organization. This is Protein SEY1 from Malassezia globosa (strain ATCC MYA-4612 / CBS 7966) (Dandruff-associated fungus).